The chain runs to 336 residues: MALKLGVIGTGAIGQDHIRRCSKTLVGSQVVAVTDINLEQAAKVVRELDIGAEVYADGHALIAAPDVEAVLVCSWGPSHEEYVLAAIAAGKPVFCEKPLAVTAEGCRHIVEAEIASGRRLVQVGFMRPYDQGYRALKSVIDSGRIGEPLMLHCAHRNPRVGENYKTDMAITDTLIHELNVLRWLLNDDYVSVQVVFPRKTSKALAHMKDPQIVMLETARGTRIDVEVFVNCQYGYDIQCEVVGESGIAKLPEPSQVQLRSEAKLSNAILMDWKDRFIAAYDVELQDFIDGVNAGTIYGPSAWDGYAAAVAADACVQAQNSGAVVPIALEMRPAFYD.

The protein belongs to the Gfo/Idh/MocA family. Homotetramer.

It catalyses the reaction myo-inositol + NAD(+) = scyllo-inosose + NADH + H(+). Functionally, involved in the oxidation of myo-inositol (MI) to 2-keto-myo-inositol (2KMI or 2-inosose). The protein is Inositol 2-dehydrogenase of Pseudomonas savastanoi pv. phaseolicola (strain 1448A / Race 6) (Pseudomonas syringae pv. phaseolicola (strain 1448A / Race 6)).